A 481-amino-acid polypeptide reads, in one-letter code: Bindin (481 aa).

A signal peptide spans 1–20 (MGFHQILVTVVALALASVRA). A propeptide spanning residues 21–245 (EFPSRTDSPT…DSKRGARKKR (225 aa)) is cleaved from the precursor. Basic and acidic residues-rich tracts occupy residues 154-163 (DGDLRKRRES) and 178-189 (RKGDEPAGHTLK). 2 disordered regions span residues 154–193 (DGDL…DLAP) and 219–243 (GHSP…GARK). The fucose-binding domain stretch occupies residues 352–360 (LRHLRHHSN). Residues 376–481 (SAMQEEEEEE…QPYGQGYLQG (106 aa)) form a disordered region. The span at 379 to 389 (QEEEEEEEEDA) shows a compositional bias: acidic residues. Residues 406–416 (AGFGGGGGGGA) are compositionally biased toward gly residues. 2 stretches are compositionally biased toward low complexity: residues 417 to 440 (MMSP…MGFP) and 464 to 481 (GMGM…YLQG).

Belongs to the bindin family.

The protein localises to the cytoplasmic vesicle. The protein resides in the secretory vesicle. It localises to the acrosome lumen. In terms of biological role, species-specific sea urchin sperm protein required for adhesion of sperm to the egg surface during fertilization. Bindin coats the acrosomal process after it is externalized by the acrosome reaction. It binds to sulfated, fucose-containing polysaccharides on the vitelline layer receptor proteoglycans which cover the egg plasma membrane. The chain is Bindin from Strongylocentrotus purpuratus (Purple sea urchin).